A 360-amino-acid polypeptide reads, in one-letter code: uncharacterized protein (360 aa).

One can recognise an ABC transporter domain in the interval 4-235 (LSLQHIQKIY…PANMFVAGFI (232 aa)). Position 37–44 (37–44 (GPSGCGKS)) interacts with ATP.

Belongs to the ABC transporter superfamily.

This is an uncharacterized protein from Escherichia coli O157:H7.